Reading from the N-terminus, the 322-residue chain is Porphobilinogen deaminase (322 aa).

Cysteine 254 is subject to S-(dipyrrolylmethanemethyl)cysteine.

The protein belongs to the HMBS family. Monomer. The cofactor is dipyrromethane.

The enzyme catalyses 4 porphobilinogen + H2O = hydroxymethylbilane + 4 NH4(+). The protein operates within porphyrin-containing compound metabolism; protoporphyrin-IX biosynthesis; coproporphyrinogen-III from 5-aminolevulinate: step 2/4. Tetrapolymerization of the monopyrrole PBG into the hydroxymethylbilane pre-uroporphyrinogen in several discrete steps. This chain is Porphobilinogen deaminase, found in Methylococcus capsulatus (strain ATCC 33009 / NCIMB 11132 / Bath).